Here is a 209-residue protein sequence, read N- to C-terminus: Guanylate kinase (209 aa).

The Guanylate kinase-like domain occupies 9–188; the sequence is GIMLVISSPS…SVHQIKCIFT (180 aa). Residue 16 to 23 coordinates ATP; it reads SPSGGGKT.

The protein belongs to the guanylate kinase family.

The protein resides in the cytoplasm. The enzyme catalyses GMP + ATP = GDP + ADP. Essential for recycling GMP and indirectly, cGMP. The polypeptide is Guanylate kinase (Ehrlichia canis (strain Jake)).